Consider the following 214-residue polypeptide: Probable transaldolase (214 aa).

Lys83 acts as the Schiff-base intermediate with substrate in catalysis.

The protein belongs to the transaldolase family. Type 3B subfamily.

The protein resides in the cytoplasm. The catalysed reaction is D-sedoheptulose 7-phosphate + D-glyceraldehyde 3-phosphate = D-erythrose 4-phosphate + beta-D-fructose 6-phosphate. Its pathway is carbohydrate degradation; pentose phosphate pathway; D-glyceraldehyde 3-phosphate and beta-D-fructose 6-phosphate from D-ribose 5-phosphate and D-xylulose 5-phosphate (non-oxidative stage): step 2/3. Its function is as follows. Transaldolase is important for the balance of metabolites in the pentose-phosphate pathway. The sequence is that of Probable transaldolase from Streptococcus equi subsp. zooepidemicus (strain MGCS10565).